The chain runs to 1099 residues: Solute carrier family 38 member 10 (1099 aa).

Transmembrane regions (helical) follow at residues 9 to 31, 36 to 58, 84 to 104, 123 to 143, 153 to 173, 229 to 249, 272 to 292, 323 to 343, 345 to 365, and 378 to 398; these read WGLV…PFCF, IVLG…MFLV, LVET…YVVI, TFRV…LSLQ, FSAM…LSSF, IFAS…FFGY, MIRV…ILPC, VLTL…PNVE, ILGF…PALI, and VVLW…LSVS. Disordered regions lie at residues 440–679 and 720–1047; these read DSQE…EEAG and EIRQ…LAPK. A Phosphoserine modification is found at S441. Basic and acidic residues-rich tracts occupy residues 441–454, 493–508, 517–528, 544–561, and 586–599; these read SQEK…KEVL, EAHR…KVVV, PEEKKPPPKLPD, ESEK…KRPE, and PRKE…RDLH. Residues S607 and S635 each carry the phosphoserine modification. Composition is skewed to basic and acidic residues over residues 653–663, 720–735, and 749–766; these read EAAEQREKNEA, EIRQ…KPKP, and GQEE…HAGE. Positions 698 to 734 form a coiled coil; that stretch reads VQQKRLLDQQEKLLAVIEEQHKEIRQQRQEGEEDKPK. T767 carries the phosphothreonine modification. Composition is skewed to basic and acidic residues over residues 793–802, 852–894, 917–928, 957–969, and 1010–1022; these read KGQHPLEEVK, EPVH…ETGK, EDSHSKSRHSEP, KSQD…RSEG, and QKPE…RDLK. S886 carries the post-translational modification Phosphoserine.

This sequence belongs to the amino acid/polyamine transporter 2 family. As to expression, only expressed in the pituitary, adrenal gland, stomach and in the upper gastrointestinal tract.

The protein resides in the membrane. The catalysed reaction is L-glutamate(out) = L-glutamate(in). The enzyme catalyses L-glutamine(out) = L-glutamine(in). It carries out the reaction L-alanine(in) = L-alanine(out). It catalyses the reaction L-serine(in) = L-serine(out). The catalysed reaction is L-leucine(in) = L-leucine(out). Functionally, facilitates bidirectional transport of amino acids. May act as a glutamate sensor that regulates glutamate-glutamine cycle and mTOR signaling in the brain. The transport mechanism remains to be elucidated. The sequence is that of Solute carrier family 38 member 10 from Rattus norvegicus (Rat).